The chain runs to 275 residues: NH(3)-dependent NAD(+) synthetase (275 aa).

ATP is bound at residue 46–53 (GISGGQDS). Residue D52 coordinates Mg(2+). A deamido-NAD(+)-binding site is contributed by R140. T160 contributes to the ATP binding site. E165 is a Mg(2+) binding site. The deamido-NAD(+) site is built by K173 and D180. ATP contacts are provided by K189 and T211. Residue 260-261 (HK) coordinates deamido-NAD(+).

Belongs to the NAD synthetase family. In terms of assembly, homodimer.

The catalysed reaction is deamido-NAD(+) + NH4(+) + ATP = AMP + diphosphate + NAD(+) + H(+). It functions in the pathway cofactor biosynthesis; NAD(+) biosynthesis; NAD(+) from deamido-NAD(+) (ammonia route): step 1/1. Catalyzes the ATP-dependent amidation of deamido-NAD to form NAD. Uses ammonia as a nitrogen source. The polypeptide is NH(3)-dependent NAD(+) synthetase (Escherichia coli O45:K1 (strain S88 / ExPEC)).